A 526-amino-acid polypeptide reads, in one-letter code: Microphthalmia-associated transcription factor (526 aa).

At Ser5 the chain carries Phosphoserine; by MTOR. Disordered stretches follow at residues 20-54 (EPKTYYELKSQPLKSSSSAEHSGASKPPLSSSTMT) and 155-179 (VLSSPCPNQPGDHAMPPVPGSSAPN). Positions 34-44 (SSSSAEHSGAS) are enriched in low complexity. Ser180 carries the phosphoserine; by MAPK modification. The segment at 224 to 291 (DDVIDDIISL…PANLPNIKRE (68 aa)) is transactivation. Phosphoserine is present on Ser280. A Glycyl lysine isopeptide (Lys-Gly) (interchain with G-Cter in SUMO) cross-link involves residue Lys289. Residues 311-364 (QKKDNHNLIERRRRFNINDRIKELGTLIPKSNDPDMRWNKGTILKASVDYIRKL) form the bHLH domain. Residues 355–401 (KASVDYIRKLQREQQRAKDLENRQKKLEHANRHLLLRVQELEMQARA) adopt a coiled-coil conformation. A leucine-zipper region spans residues 374–395 (LENRQKKLEHANRHLLLRVQEL). A DNA-binding regulation region spans residues 401-431 (AHGLSLIPSTGLCSPDLVNRIIKQEPVLENC). Residue Ser405 is modified to Phosphoserine; by GSK3. Residue Ser414 is modified to Phosphoserine. Residue Lys423 forms a Glycyl lysine isopeptide (Lys-Gly) (interchain with G-Cter in SUMO) linkage. Ser491 carries the post-translational modification Phosphoserine. The tract at residues 496 to 526 (TDPLLSSVSPGASKTSSRRSSMSAEETEHAC) is disordered. A compositionally biased stretch (low complexity) spans 507–519 (ASKTSSRRSSMSA). Ser516 is modified (phosphoserine; by RPS6KA1).

Belongs to the MiT/TFE family. As to quaternary structure, homodimer or heterodimer; dimerization is mediated via the coiled coil region. Efficient DNA binding requires dimerization with another bHLH protein. Binds DNA in the form of homodimer or heterodimer with either TFE3, TFEB or TFEC. Interacts with small GTPases Rag (RagA/RRAGA, RagB/RRAGB, RagC/RRAGC and/or RagD/RRAGD); promoting its recruitment to lysosomal membrane in the presence of nutrients. Interacts with KARS1. Identified in a complex with HINT1 and CTNNB1. Interacts with VSX2. When nutrients are present, phosphorylation by MTOR at Ser-5 via non-canonical mTORC1 pathway promotes ubiquitination by the SCF(BTRC) complex, followed by degradation. Phosphorylation at Ser-405 significantly enhances the ability to bind the tyrosinase promoter. Phosphorylation by MARK3/cTAK1 at Ser-280 promotes association with 14-3-3/YWHA adapters and retention in the cytosol. Phosphorylated at Ser-180 and Ser-516 following KIT signaling, triggering a short live activation: Phosphorylation at Ser-180 and Ser-516 by MAPK and RPS6KA1, respectively, activate the transcription factor activity but also promote ubiquitination and subsequent degradation by the proteasome. Phosphorylated in response to blue light (415nm). Post-translationally, ubiquitinated by the SCF(BTRC) and SCF(FBXW11) complexes following phosphorylation ar Ser-5 by MTOR, leading to its degradation by the proteasome. Ubiquitinated following phosphorylation at Ser-180, leading to subsequent degradation by the proteasome. Deubiquitinated by USP13, preventing its degradation. In terms of tissue distribution, in the adult, expressed at high levels in the heart, skin, skeletal muscle, intestine, stomach, kidney, ovary, lung, spleen and brain. In the embryo, expressed in developing eye, ear, skin and heart. Isoform M is expressed in melanocytes and also in the embryonic and adult heart while isoform A and isoform H are more widely expressed.

The protein resides in the nucleus. The protein localises to the cytoplasm. It is found in the lysosome membrane. In terms of biological role, transcription factor that acts as a master regulator of melanocyte survival and differentiation as well as melanosome biogenesis. Binds to M-boxes (5'-TCATGTG-3') and symmetrical DNA sequences (E-boxes) (5'-CACGTG-3') found in the promoter of pigmentation genes, such as tyrosinase (TYR). Involved in the cellular response to amino acid availability by acting downstream of MTOR: in the presence of nutrients, MITF phosphorylation by MTOR promotes its inactivation. Upon starvation or lysosomal stress, inhibition of MTOR induces MITF dephosphorylation, resulting in transcription factor activity. Plays an important role in melanocyte development by regulating the expression of tyrosinase (TYR) and tyrosinase-related protein 1 (TYRP1). Plays a critical role in the differentiation of various cell types, such as neural crest-derived melanocytes, mast cells, osteoclasts and optic cup-derived retinal pigment epithelium. This Mus musculus (Mouse) protein is Microphthalmia-associated transcription factor (Mitf).